We begin with the raw amino-acid sequence, 300 residues long: Ubiquitin carboxyl-terminal hydrolase 2 (300 aa).

Positions 2–220 (SWTTIESDAG…IRFNLMVICK (219 aa)) constitute a UCH catalytic domain. Cys83 (nucleophile) is an active-site residue. His159 functions as the Proton donor in the catalytic mechanism. The region spanning 261 to 290 (NFVGLFVELSKLLVKDRIDKNTWNSTLETA) is the ULD domain.

Belongs to the peptidase C12 family. In terms of assembly, component of the 26S proteasome. Interacts with rpn10.

The protein resides in the nucleus. The enzyme catalyses Thiol-dependent hydrolysis of ester, thioester, amide, peptide and isopeptide bonds formed by the C-terminal Gly of ubiquitin (a 76-residue protein attached to proteins as an intracellular targeting signal).. Functionally, ubiquitin-protein hydrolase is involved both in the processing of ubiquitin precursors and of ubiquitinated proteins. This enzyme is a thiol protease that recognizes and hydrolyzes a peptide bond at the C-terminal glycine of ubiquitin. The chain is Ubiquitin carboxyl-terminal hydrolase 2 (uch2) from Schizosaccharomyces pombe (strain 972 / ATCC 24843) (Fission yeast).